We begin with the raw amino-acid sequence, 728 residues long: Phosphoribosylformylglycinamidine synthase subunit PurL (728 aa).

The active site involves His42. ATP-binding residues include Tyr45 and Lys84. Glu86 contributes to the Mg(2+) binding site. Substrate is bound by residues 87–90 (SHNH) and Arg109. His88 (proton acceptor) is an active-site residue. Mg(2+) is bound at residue Asp110. Residue Gln237 coordinates substrate. Asp265 is a Mg(2+) binding site. Residue 309-311 (ESQ) participates in substrate binding. Residues Asp491 and Gly528 each contribute to the ATP site. Asn529 serves as a coordination point for Mg(2+). Ser531 serves as a coordination point for substrate.

Belongs to the FGAMS family. Monomer. Part of the FGAM synthase complex composed of 1 PurL, 1 PurQ and 2 PurS subunits.

The protein resides in the cytoplasm. It carries out the reaction N(2)-formyl-N(1)-(5-phospho-beta-D-ribosyl)glycinamide + L-glutamine + ATP + H2O = 2-formamido-N(1)-(5-O-phospho-beta-D-ribosyl)acetamidine + L-glutamate + ADP + phosphate + H(+). It participates in purine metabolism; IMP biosynthesis via de novo pathway; 5-amino-1-(5-phospho-D-ribosyl)imidazole from N(2)-formyl-N(1)-(5-phospho-D-ribosyl)glycinamide: step 1/2. Part of the phosphoribosylformylglycinamidine synthase complex involved in the purines biosynthetic pathway. Catalyzes the ATP-dependent conversion of formylglycinamide ribonucleotide (FGAR) and glutamine to yield formylglycinamidine ribonucleotide (FGAM) and glutamate. The FGAM synthase complex is composed of three subunits. PurQ produces an ammonia molecule by converting glutamine to glutamate. PurL transfers the ammonia molecule to FGAR to form FGAM in an ATP-dependent manner. PurS interacts with PurQ and PurL and is thought to assist in the transfer of the ammonia molecule from PurQ to PurL. This Campylobacter jejuni subsp. doylei (strain ATCC BAA-1458 / RM4099 / 269.97) protein is Phosphoribosylformylglycinamidine synthase subunit PurL.